We begin with the raw amino-acid sequence, 117 residues long: Large ribosomal subunit protein uL18 (117 aa).

Belongs to the universal ribosomal protein uL18 family. As to quaternary structure, part of the 50S ribosomal subunit; part of the 5S rRNA/L5/L18/L25 subcomplex. Contacts the 5S and 23S rRNAs.

In terms of biological role, this is one of the proteins that bind and probably mediate the attachment of the 5S RNA into the large ribosomal subunit, where it forms part of the central protuberance. The polypeptide is Large ribosomal subunit protein uL18 (Pseudoalteromonas atlantica (strain T6c / ATCC BAA-1087)).